The primary structure comprises 327 residues: Probable cell division protein WhiA (327 aa).

A DNA-binding region (H-T-H motif) is located at residues 275–308; it reads SLEELGRLADPQMTKDAVAGRIRRLLTTADKRAR.

Belongs to the WhiA family.

In terms of biological role, involved in cell division and chromosome segregation. The protein is Probable cell division protein WhiA of Corynebacterium efficiens (strain DSM 44549 / YS-314 / AJ 12310 / JCM 11189 / NBRC 100395).